A 424-amino-acid chain; its full sequence is PDZ and LIM domain protein 7 (424 aa).

The PDZ domain occupies M1–Q85. Position 78 is a phosphoserine (S78). Residues L81–D98 are compositionally biased toward polar residues. Positions L81–M221 are disordered. Phosphothreonine is present on T96. Basic and acidic residues predominate over residues S110–P123. The span at E174–R187 shows a compositional bias: pro residues. The segment covering K204–M221 has biased composition (polar residues). 3 LIM zinc-binding domains span residues P247–A305, P306–T365, and K366–V424.

As to quaternary structure, binds via its LIM zinc-binding 3 domain (LIM 3) domain to endocytic codes of INSR, but not with those of IGF1R, LDLR, TFRC, or EGFR. Interacts with various PKC isoforms through the LIM zinc-binding domains. Binds to RET in a phosphorylation-independent manner via its LIM zinc-binding 2 domain (LIM 2). Probably part of a complex with SHC and the RET dimer. Interacts with TPM2, TBX4 and TBX5.

It localises to the cytoplasm. It is found in the cytoskeleton. May function as a scaffold on which the coordinated assembly of proteins can occur. May play a role as an adapter that, via its PDZ domain, localizes LIM-binding proteins to actin filaments of both skeletal muscle and nonmuscle tissues. Involved in both of the two fundamental mechanisms of bone formation, direct bone formation (e.g. embryonic flat bones mandible and cranium), and endochondral bone formation (e.g. embryonic long bone development). Plays a role during fracture repair. Involved in BMP6 signaling pathway. This is PDZ and LIM domain protein 7 (PDLIM7) from Bos taurus (Bovine).